A 49-amino-acid polypeptide reads, in one-letter code: Astexin-2 (49 aa).

Residues 1 to 25 constitute a propeptide that is removed on maturation; it reads MTKRTTIAARRVGLIDLGKATRQTK. Residues 26-34 constitute a cross-link (isoaspartyl glycine isopeptide (Gly-Asp)); the sequence is GLTQIQALD.

Post-translationally, this lasso peptide is hydrolyzed to a linear form by the isopeptidase AtxE2, in vitro. The isopeptidase AtxE2 only recognizes the threaded form (but not the unthreaded form).

The protein resides in the cytoplasm. The protein localises to the secreted. Its function is as follows. Shows weak antimicrobial activity against its phylogenetic relative Caulobacter crescentus. Does not show activity against other bacteria tested (E.coli, Vibrio sp, Burkhoderia thailandensis, and Salmonella newport). In Asticcacaulis excentricus (strain ATCC 15261 / DSM 4724 / KCTC 12464 / NCIMB 9791 / VKM B-1370 / CB 48), this protein is Astexin-2.